We begin with the raw amino-acid sequence, 473 residues long: Bifunctional protein HldE (473 aa).

The ribokinase stretch occupies residues 1 to 318; it reads MKLTLPRYDQ…RAVQREEGSE (318 aa). Residue 194-197 coordinates ATP; the sequence is NLHE. Asp-263 is a catalytic residue. The cytidylyltransferase stretch occupies residues 343-473; the sequence is FTNGCFDILH…TAIVEKIRNK (131 aa).

The protein in the N-terminal section; belongs to the carbohydrate kinase PfkB family. It in the C-terminal section; belongs to the cytidylyltransferase family. In terms of assembly, homodimer.

The catalysed reaction is D-glycero-beta-D-manno-heptose 7-phosphate + ATP = D-glycero-beta-D-manno-heptose 1,7-bisphosphate + ADP + H(+). It carries out the reaction D-glycero-beta-D-manno-heptose 1-phosphate + ATP + H(+) = ADP-D-glycero-beta-D-manno-heptose + diphosphate. Its pathway is nucleotide-sugar biosynthesis; ADP-L-glycero-beta-D-manno-heptose biosynthesis; ADP-L-glycero-beta-D-manno-heptose from D-glycero-beta-D-manno-heptose 7-phosphate: step 1/4. It functions in the pathway nucleotide-sugar biosynthesis; ADP-L-glycero-beta-D-manno-heptose biosynthesis; ADP-L-glycero-beta-D-manno-heptose from D-glycero-beta-D-manno-heptose 7-phosphate: step 3/4. Functionally, catalyzes the phosphorylation of D-glycero-D-manno-heptose 7-phosphate at the C-1 position to selectively form D-glycero-beta-D-manno-heptose-1,7-bisphosphate. Catalyzes the ADP transfer from ATP to D-glycero-beta-D-manno-heptose 1-phosphate, yielding ADP-D-glycero-beta-D-manno-heptose. This is Bifunctional protein HldE from Ectopseudomonas mendocina (strain ymp) (Pseudomonas mendocina).